The chain runs to 483 residues: General transcription factor IIH subunit 4 (483 aa).

Residues 93–117 are disordered; the sequence is PQQQQSSQQSSSQQQQQQQQQQQQT. The span at 94–116 shows a compositional bias: low complexity; the sequence is QQQQSSQQSSSQQQQQQQQQQQQ.

Belongs to the TFB2 family. Component of the 7-subunit TFIIH core complex composed of XPB/repB, XPD/repD, gtf2h1, gtf2h2, gtf2h3, gtf2h4 and gtf2h5, which is active in NER. The core complex associates with the 3-subunit CDK-activating kinase (CAK) module composed of cycH/cyclin H, cdk7 and mnat1 to form the 10-subunit holoenzyme (holo-TFIIH) active in transcription.

Its subcellular location is the nucleus. Its function is as follows. Component of the general transcription and DNA repair factor IIH (TFIIH) core complex, which is involved in general and transcription-coupled nucleotide excision repair (NER) of damaged DNA and, when complexed to CAK, in RNA transcription by RNA polymerase II. In NER, TFIIH acts by opening DNA around the lesion to allow the excision of the damaged oligonucleotide and its replacement by a new DNA fragment. In transcription, TFIIH has an essential role in transcription initiation. When the pre-initiation complex (PIC) has been established, TFIIH is required for promoter opening and promoter escape. Phosphorylation of the C-terminal tail (CTD) of the largest subunit of RNA polymerase II by the kinase module CAK controls the initiation of transcription. The protein is General transcription factor IIH subunit 4 (gtf2h4) of Dictyostelium discoideum (Social amoeba).